We begin with the raw amino-acid sequence, 448 residues long: FAD-dependent monooxygenase srdH (448 aa).

Residues glutamate 32 and arginine 107 each coordinate FAD. Glutamine 227 is an active-site residue. Aspartate 313 serves as a coordination point for FAD.

The protein belongs to the paxM FAD-dependent monooxygenase family. FAD serves as cofactor.

Highly reducing polyketide synthase; part of the gene cluster that mediates the biosynthesis of sordarial, a salicylic aldehyde structurally related to the phytotoxin pyriculol. The most interesting aspect of this pathway is formation of an aromatic product from the highly reducing polyketide synthase srdA. SrdA synthesizes a reduced polyketide chain from one molecule of acetyl-CoA and five molecules of malonyl-CoA. The polyketide chain is then reductively released as an aldehyde. The oxidoreductases srdC, srdD and srdE then oxidize one of the hydroxy groups to facilitate the intramolecular aldol condensation, followed by dehydration to yield a salicylic aldehyde. This aldehyde can undergo facile reduction by endogenous reductases to yield the alcohol 1-hydroxy-2-hydroxymethyl-3-pent-1,3-dienylbenzene. The flavin-dependent srdI counteract against the propensity of the aldehydes to be reduced under physiological conditions and is responsible for reoxidizing 1-hydroxy-2-hydroxymethyl-3-pent-1,3-dienylbenzene back to the salicylic aldehyde. This salicylic aldehyde is then selectively epoxidized by the cupin-domain-containing oxidoreductase srdB to yield the epoxide, which can be hydrolyzed stereoselectively by the hydrolase srdG to give the final product sordarial. This is FAD-dependent monooxygenase srdH from Neurospora crassa (strain ATCC 24698 / 74-OR23-1A / CBS 708.71 / DSM 1257 / FGSC 987).